The following is a 226-amino-acid chain: uncharacterized protein (226 aa).

Positions 121–163 form a coiled coil; that stretch reads TVDELIKTIEKELNKVKKSRKNREKKTNEVEEIIEELIEEDDI.

This is an uncharacterized protein from Methanocaldococcus jannaschii (strain ATCC 43067 / DSM 2661 / JAL-1 / JCM 10045 / NBRC 100440) (Methanococcus jannaschii).